A 155-amino-acid chain; its full sequence is 6,7-dimethyl-8-ribityllumazine synthase (155 aa).

5-amino-6-(D-ribitylamino)uracil is bound by residues tryptophan 23, 57 to 59, and 81 to 83; these read AWE and CVI. (2S)-2-hydroxy-3-oxobutyl phosphate is bound at residue 86–87; sequence DT. Histidine 89 functions as the Proton donor in the catalytic mechanism. Asparagine 114 contributes to the 5-amino-6-(D-ribitylamino)uracil binding site. A (2S)-2-hydroxy-3-oxobutyl phosphate-binding site is contributed by arginine 128.

The protein belongs to the DMRL synthase family. As to quaternary structure, forms an icosahedral capsid composed of 60 subunits, arranged as a dodecamer of pentamers.

The catalysed reaction is (2S)-2-hydroxy-3-oxobutyl phosphate + 5-amino-6-(D-ribitylamino)uracil = 6,7-dimethyl-8-(1-D-ribityl)lumazine + phosphate + 2 H2O + H(+). It participates in cofactor biosynthesis; riboflavin biosynthesis; riboflavin from 2-hydroxy-3-oxobutyl phosphate and 5-amino-6-(D-ribitylamino)uracil: step 1/2. Functionally, catalyzes the formation of 6,7-dimethyl-8-ribityllumazine by condensation of 5-amino-6-(D-ribitylamino)uracil with 3,4-dihydroxy-2-butanone 4-phosphate. This is the penultimate step in the biosynthesis of riboflavin. The chain is 6,7-dimethyl-8-ribityllumazine synthase from Stenotrophomonas maltophilia (strain K279a).